We begin with the raw amino-acid sequence, 234 residues long: tRNA (guanine-N(1)-)-methyltransferase (234 aa).

S-adenosyl-L-methionine contacts are provided by residues G112 and I132–L137.

This sequence belongs to the RNA methyltransferase TrmD family. Homodimer.

The protein resides in the cytoplasm. It carries out the reaction guanosine(37) in tRNA + S-adenosyl-L-methionine = N(1)-methylguanosine(37) in tRNA + S-adenosyl-L-homocysteine + H(+). In terms of biological role, specifically methylates guanosine-37 in various tRNAs. The sequence is that of tRNA (guanine-N(1)-)-methyltransferase from Campylobacter jejuni subsp. doylei (strain ATCC BAA-1458 / RM4099 / 269.97).